We begin with the raw amino-acid sequence, 533 residues long: CWF19-like protein 1 homolog (533 aa).

Residues 290–314 (EMGGAEDGAGNGRKRHNDGGNDGPR) are disordered.

It belongs to the CWF19 family.

This is CWF19-like protein 1 homolog from Caenorhabditis elegans.